The chain runs to 156 residues: Ribosomal RNA large subunit methyltransferase H (156 aa).

S-adenosyl-L-methionine-binding positions include Leu-73, Gly-104, and 123-128 (LSSLTL).

The protein belongs to the RNA methyltransferase RlmH family. Homodimer.

It localises to the cytoplasm. The enzyme catalyses pseudouridine(1915) in 23S rRNA + S-adenosyl-L-methionine = N(3)-methylpseudouridine(1915) in 23S rRNA + S-adenosyl-L-homocysteine + H(+). Functionally, specifically methylates the pseudouridine at position 1915 (m3Psi1915) in 23S rRNA. The protein is Ribosomal RNA large subunit methyltransferase H of Bordetella petrii (strain ATCC BAA-461 / DSM 12804 / CCUG 43448).